The following is a 311-amino-acid chain: Formimidoylglutamase (311 aa).

Residues histidine 130, aspartate 155, histidine 157, aspartate 159, cysteine 242, and aspartate 244 each coordinate Mn(2+).

The protein belongs to the arginase family. Requires Mn(2+) as cofactor.

The enzyme catalyses N-formimidoyl-L-glutamate + H2O = formamide + L-glutamate. It participates in amino-acid degradation; L-histidine degradation into L-glutamate; L-glutamate from N-formimidoyl-L-glutamate (hydrolase route): step 1/1. Functionally, catalyzes the conversion of N-formimidoyl-L-glutamate to L-glutamate and formamide. The polypeptide is Formimidoylglutamase (Staphylococcus aureus (strain MRSA252)).